The chain runs to 130 residues: MKRHEAREKALQALFQIDVGRIPPDEALHNVTGGGDIDPFLRQLVFGVVEHQEEIDELLRANLEKWTLERVANVDRAILRMATYEMKYADDVPVSVSLDEAVELAKKFGDWKSGSFVNGVLSKVKAALQK.

The protein belongs to the NusB family.

In terms of biological role, involved in transcription antitermination. Required for transcription of ribosomal RNA (rRNA) genes. Binds specifically to the boxA antiterminator sequence of the ribosomal RNA (rrn) operons. This chain is Transcription antitermination protein NusB, found in Geobacillus kaustophilus (strain HTA426).